A 257-amino-acid chain; its full sequence is Alcohol dehydrogenase 1 (257 aa).

9 to 33 (VFVGGLGFIAYEACKYLMNNDLASL) lines the NAD(+) pocket. Residue serine 137 participates in substrate binding. Tyrosine 150 acts as the Proton acceptor in catalysis.

The protein belongs to the short-chain dehydrogenases/reductases (SDR) family. In terms of assembly, homodimer.

It catalyses the reaction a primary alcohol + NAD(+) = an aldehyde + NADH + H(+). The catalysed reaction is a secondary alcohol + NAD(+) = a ketone + NADH + H(+). The sequence is that of Alcohol dehydrogenase 1 (ADH1) from Ceratitis capitata (Mediterranean fruit fly).